The sequence spans 387 residues: 3-ketoacyl-CoA thiolase (387 aa).

Cys-91 acts as the Acyl-thioester intermediate in catalysis. Catalysis depends on proton acceptor residues His-343 and Cys-373.

It belongs to the thiolase-like superfamily. Thiolase family. Heterotetramer of two alpha chains (FadB) and two beta chains (FadA).

Its subcellular location is the cytoplasm. It catalyses the reaction an acyl-CoA + acetyl-CoA = a 3-oxoacyl-CoA + CoA. It functions in the pathway lipid metabolism; fatty acid beta-oxidation. In terms of biological role, catalyzes the final step of fatty acid oxidation in which acetyl-CoA is released and the CoA ester of a fatty acid two carbons shorter is formed. The protein is 3-ketoacyl-CoA thiolase of Escherichia coli (strain UTI89 / UPEC).